Consider the following 84-residue polypeptide: Small ribosomal subunit protein uS17 (84 aa).

This sequence belongs to the universal ribosomal protein uS17 family. In terms of assembly, part of the 30S ribosomal subunit.

In terms of biological role, one of the primary rRNA binding proteins, it binds specifically to the 5'-end of 16S ribosomal RNA. The chain is Small ribosomal subunit protein uS17 from Alkaliphilus oremlandii (strain OhILAs) (Clostridium oremlandii (strain OhILAs)).